The chain runs to 215 residues: Orotate phosphoribosyltransferase (215 aa).

Lysine 25 serves as a coordination point for 5-phospho-alpha-D-ribose 1-diphosphate. 33 to 34 (FF) provides a ligand contact to orotate. Residues 71–72 (YK), arginine 98, lysine 99, lysine 102, histidine 104, and 124–132 (DDVITAGTA) each bind 5-phospho-alpha-D-ribose 1-diphosphate. Residues threonine 128 and arginine 156 each coordinate orotate.

The protein belongs to the purine/pyrimidine phosphoribosyltransferase family. PyrE subfamily. As to quaternary structure, homodimer.

It carries out the reaction orotidine 5'-phosphate + diphosphate = orotate + 5-phospho-alpha-D-ribose 1-diphosphate. Its pathway is pyrimidine metabolism; UMP biosynthesis via de novo pathway; UMP from orotate: step 1/2. Its function is as follows. Catalyzes the transfer of a ribosyl phosphate group from 5-phosphoribose 1-diphosphate to orotate, leading to the formation of orotidine monophosphate (OMP). This is Orotate phosphoribosyltransferase (ura5) from Schizosaccharomyces pombe (strain 972 / ATCC 24843) (Fission yeast).